Consider the following 210-residue polypeptide: Proteasome subunit beta (210 aa).

The propeptide at 1 to 9 (MIHDKVFKG) is removed in mature form; by autocatalysis. The Nucleophile role is filled by Thr-10.

Belongs to the peptidase T1B family. In terms of assembly, the 20S proteasome core is composed of 14 alpha and 14 beta subunits that assemble into four stacked heptameric rings, resulting in a barrel-shaped structure. The two inner rings, each composed of seven catalytic beta subunits, are sandwiched by two outer rings, each composed of seven alpha subunits. The catalytic chamber with the active sites is on the inside of the barrel. Has a gated structure, the ends of the cylinder being occluded by the N-termini of the alpha-subunits. Is capped at one or both ends by the proteasome regulatory ATPase, PAN.

The protein localises to the cytoplasm. The enzyme catalyses Cleavage of peptide bonds with very broad specificity.. The formation of the proteasomal ATPase PAN-20S proteasome complex, via the docking of the C-termini of PAN into the intersubunit pockets in the alpha-rings, triggers opening of the gate for substrate entry. Interconversion between the open-gate and close-gate conformations leads to a dynamic regulation of the 20S proteasome proteolysis activity. In terms of biological role, component of the proteasome core, a large protease complex with broad specificity involved in protein degradation. This Ferroglobus placidus (strain DSM 10642 / AEDII12DO) protein is Proteasome subunit beta.